A 272-amino-acid polypeptide reads, in one-letter code: Flt3 receptor-interacting lectin (272 aa).

The first 8 residues, 1–8, serve as a signal peptide directing secretion; it reads MFPSKVKS. The alpha-D-mannopyranose site is built by Asp-94 and Gly-112. N-linked (GlcNAc...) asparagine glycans are attached at residues Asn-125 and Asn-131. Alpha-D-mannopyranose contacts are provided by residues Asn-152 and 237-238; that span reads QD.

It belongs to the leguminous lectin family. As to quaternary structure, dimer (alpha/beta)2. Tetramer (alpha/beta)4. In terms of processing, glycosylated at Asn-125 by either a paucimannose type N-glycan (alpha-4) or a single N-acetylglucosamine (alpha-3). Glycosylated at Asn-131 by a paucimannose type N-glycan (alpha-2, alpha-3 and alpha-4). In alpha-2, Asn-125 is deamidated to an Asp, possibly due to the action of intrinsic peptide N-glycosidase (PGNase).

It is found in the protein storage vacuole lumen. In terms of biological role, mannose-binding lectin. Accommodates most effectively a non-reducing terminal alpha-d-mannosyl unit. Strongly precipitates murine IgM but not IgG. In Lablab purpureus (Hyacinth bean), this protein is Flt3 receptor-interacting lectin.